We begin with the raw amino-acid sequence, 661 residues long: Glycogen debranching enzyme (661 aa).

The active-site Nucleophile is Asp-338. Catalysis depends on Glu-373, which acts as the Proton donor. Residues 460–481 (NQLNGEGNRDGSDRNFSNNHGV) are disordered.

Belongs to the glycosyl hydrolase 13 family.

It carries out the reaction Hydrolysis of (1-&gt;6)-alpha-D-glucosidic linkages to branches with degrees of polymerization of three or four glucose residues in limit dextrin.. The protein operates within glycan degradation; glycogen degradation. In terms of biological role, removes maltotriose and maltotetraose chains that are attached by 1,6-alpha-linkage to the limit dextrin main chain, generating a debranched limit dextrin. The polypeptide is Glycogen debranching enzyme (Serratia proteamaculans (strain 568)).